A 493-amino-acid polypeptide reads, in one-letter code: Lysine--tRNA ligase (493 aa).

Glu-406 and Glu-413 together coordinate Mg(2+).

It belongs to the class-II aminoacyl-tRNA synthetase family. In terms of assembly, homodimer. Mg(2+) is required as a cofactor.

It is found in the cytoplasm. The enzyme catalyses tRNA(Lys) + L-lysine + ATP = L-lysyl-tRNA(Lys) + AMP + diphosphate. In Leuconostoc citreum (strain KM20), this protein is Lysine--tRNA ligase.